Reading from the N-terminus, the 35-residue chain is Fatty acid synthase (35 aa).

S12 is a catalytic residue.

In terms of assembly, homodimer which is arranged in a head to tail fashion. Interacts with CEACAM1; this interaction is insulin and phosphorylation-dependent; reduces fatty-acid synthase activity.

It is found in the cytoplasm. Its subcellular location is the melanosome. It catalyses the reaction acetyl-CoA + n malonyl-CoA + 2n NADPH + 2n H(+) = a long-chain fatty acid + (n+1) CoA + n CO2 + 2n NADP(+).. Its function is as follows. Fatty acid synthetase catalyzes the formation of long-chain fatty acids from acetyl-CoA, malonyl-CoA and NADPH. This multifunctional protein has 7 catalytic activities as an acyl carrier protein. This fragment is from the acyltransferase domain of the fatty acid synthetase. This chain is Fatty acid synthase (FASN), found in Capra hircus (Goat).